The chain runs to 30 residues: Basic phospholipase A2 CM-I (30 aa).

Belongs to the phospholipase A2 family. Group I subfamily. Ca(2+) is required as a cofactor. As to expression, expressed by the venom gland.

The protein localises to the secreted. The enzyme catalyses a 1,2-diacyl-sn-glycero-3-phosphocholine + H2O = a 1-acyl-sn-glycero-3-phosphocholine + a fatty acid + H(+). In terms of biological role, snake venom phospholipase A2 (PLA2) that shows weak anticoagulant activity. Is more catalytically active than the strong anticoagulant protein CM-IV found in this venom. Acts by inhibiting the complex composed of tissue factor (F3) and coagulation factor VIIa (F7) (TF-VIIa complex) by only enzymatic mechanism. PLA2 catalyzes the calcium-dependent hydrolysis of the 2-acyl groups in 3-sn-phosphoglycerides. The sequence is that of Basic phospholipase A2 CM-I from Naja nigricollis (Black-necked spitting cobra).